Consider the following 293-residue polypeptide: Ribosomal RNA small subunit methyltransferase A (293 aa).

S-adenosyl-L-methionine contacts are provided by N29, L31, G56, E77, D102, and N127.

This sequence belongs to the class I-like SAM-binding methyltransferase superfamily. rRNA adenine N(6)-methyltransferase family. RsmA subfamily.

The protein resides in the cytoplasm. The catalysed reaction is adenosine(1518)/adenosine(1519) in 16S rRNA + 4 S-adenosyl-L-methionine = N(6)-dimethyladenosine(1518)/N(6)-dimethyladenosine(1519) in 16S rRNA + 4 S-adenosyl-L-homocysteine + 4 H(+). In terms of biological role, specifically dimethylates two adjacent adenosines (A1518 and A1519) in the loop of a conserved hairpin near the 3'-end of 16S rRNA in the 30S particle. May play a critical role in biogenesis of 30S subunits. The protein is Ribosomal RNA small subunit methyltransferase A of Geobacillus kaustophilus (strain HTA426).